The following is a 548-amino-acid chain: SH2/SH3 adapter protein dreadlocks (548 aa).

Disordered regions lie at residues 12–37 (IPDS…QHQN), 57–92 (QVPV…TASS), and 113–146 (GSGS…MKHG). The segment covering 20–37 (QQYPQQQQHPPQLPQHQN) has biased composition (low complexity). A compositionally biased stretch (gly residues) spans 113–122 (GSGSANGSGS). Positions 123-135 (GNSSSGSAAGNAG) are enriched in low complexity. The SH3 1 domain maps to 150 to 209 (DDVCYVVAKYDYAAQGAQELDLRKNERYLLLDDSKHWWRVQNSRNQSGYVPSNYVKKEKP). Positions 219–247 (VKKGSGSKTLPNCSPSRQVESPTMSRRLP) are disordered. Polar residues predominate over residues 227–242 (TLPNCSPSRQVESPTM). SH3 domains lie at 252–311 (EAIG…EDCD) and 324–386 (NVLD…ELND). The disordered stretch occupies residues 398-442 (SAGNGNGGGSNGGAGGGGGNDSMERRNEGNKPAAQSSGQPIERPN). Positions 401–417 (NGNGGGSNGGAGGGGGN) are enriched in gly residues. The region spanning 448 to 542 (WYYGAITRSQ…GEKLYLVRSL (95 aa)) is the SH2 domain.

Interacts (via SH2 and SH3 domains) with Dscam1 (via cytoplasmic domain); the interaction is direct and requires Dscam1 to be phosphorylated. Interacts (via SH2 and SH3 domains) with InR/Insulin-like receptor (via C-terminal cytoplasmic region); the interaction requires InR kinase activity, probably for autophosphorylation stimulated by insulin signaling. Interacts with Ptp61F (via C-terminus); this interaction is independent of insulin stimulation. Interacts (via SH3 domain 2) with Pak (via N-terminal PXXP motif). Phosphorylated by Src42A and possibly by other tyrosine kinases. Constitutively dephosphorylated by its binding partner Ptp61F.

Its subcellular location is the perikaryon. The protein localises to the cell projection. The protein resides in the axon. It localises to the growth cone. Adapter protein that links cell surface receptor tyrosine phosphorylation to downstream signaling pathways and effectors, many of which are involved in regulation of the actin cytoskeleton. Recruited by Dscam1/Down syndrome cell adhesion molecule homolog and InR/insulin-like receptor. Recruits Pak to membranes, probably when dock/dreadlocks is associated with activated receptors. Required for guidance and targeting of photoreceptor (R cell) axon projections but not for axon outgrowth, differentiation or target induction in the developing eye. As part of a signaling pathway that involves the lbm/late bloomer protein, involved in synapse formation of the RP3 motorneuron at the muscle 7/6 cleft, probably by stimulating axon defasciculation from other SNb neurons. The chain is SH2/SH3 adapter protein dreadlocks from Drosophila melanogaster (Fruit fly).